Reading from the N-terminus, the 202-residue chain is Probable septum site-determining protein MinC (202 aa).

Belongs to the MinC family. As to quaternary structure, interacts with MinD and FtsZ.

Functionally, cell division inhibitor that blocks the formation of polar Z ring septums. Rapidly oscillates between the poles of the cell to destabilize FtsZ filaments that have formed before they mature into polar Z rings. Prevents FtsZ polymerization. This is Probable septum site-determining protein MinC from Sulfurihydrogenibium sp. (strain YO3AOP1).